A 1140-amino-acid chain; its full sequence is Calcium-activated potassium channel slo-1 (1140 aa).

At 1 to 44 the chain is on the extracellular side; it reads MGEIYSPSQSKGFNQPYGYPMNCNLSRVFMEMTEEDRKCLEERK. A helical transmembrane segment spans residues 45–65; it reads YWCFLLSSITTFCASMILVVI. At 66-139 the chain is on the cytoplasmic side; the sequence is WRVVTHLCCQ…LISGQSLTGR (74 aa). The helical transmembrane segment at 140–161 threads the bilayer; the sequence is FLVLLVFILSIGSLIIYFYDAS. Over 162–178 the chain is Extracellular; that stretch reads FQNFQVETCIPWQDSPS. Residues 179 to 199 traverse the membrane as a helical segment; that stretch reads QQIDLGFNIFFLVYFFIRFIA. Residues 200-203 are Cytoplasmic-facing; sequence ASDK. Residues 204–224 form a helical membrane-spanning segment; sequence VWFLLEMYSWIDFFTIPPSFV. Over 225-228 the chain is Extracellular; it reads AIYL. Residues 229-249 traverse the membrane as a helical; Voltage-sensor segment; sequence QRNWLGFRFLRALRLMTVPDI. At 250–264 the chain is on the cytoplasmic side; that stretch reads LQYLNILKTSSSIRL. A helical membrane pass occupies residues 265–285; that stretch reads TQLVTIFVAVCLTGAGLVHLL. The Extracellular portion of the chain corresponds to 286–299; it reads ENSGDFFKGFINPH. The segment at residues 300-322 is an intramembrane region (pore-forming); sequence RITYADSVYFVLVTMSTVGYGDI. The Selectivity for potassium motif lies at 316–319; that stretch reads TVGY. Residues 323–331 are Extracellular-facing; that stretch reads YCTTLCGRL. The chain crosses the membrane as a helical span at residues 332–352; the sequence is FMIFFILFGLAMFASYVPEIA. At 353–1140 the chain is on the cytoplasmic side; that stretch reads DLIGNRQKYG…LEYEPGKRHF (788 aa). One can recognise an RCK N-terminal 1 domain in the interval 371-514; it reads KKHIVVCGHI…DWKRGDDVIC (144 aa). The tract at residues 520–540 is segment S7; the sequence is LGFIAQSCLAPGFSTMMANLF. The segment at 578–598 is segment S8; that stretch reads MTFPEAVDLLFNRLGLLLLAI. The interval 797-817 is segment S9; the sequence is VLNGHVVVCLFADQDSPLIGL. The RCK N-terminal 2 domain maps to 799–953; sequence NGHVVVCLFA…GAKFGTNVPM (155 aa). The short motif at 955–977 is the Calcium bowl element; that stretch reads TELVNDSNVQFLDQDDDDDPDTE. Residues Gln-964, Asp-967, Asp-970, and Asp-972 each coordinate Ca(2+). A segment S10 region spans residues 984-1004; the sequence is FACGTAFAISVLDSLMSTTYF.

The protein belongs to the potassium channel family. Calcium-activated (TC 1.A.1.3) subfamily. Slo sub-subfamily. As to quaternary structure, homotetramer; which constitutes the calcium-activated potassium channel. In terms of processing, phosphorylated. Expressed in synaptic regions of the nervous system including in both the nerve ring and nerve cords, as well as in the body-wall and vulval muscle. Expressed broadly in motor neurons. Forms puncta at presynaptic terminals of neurons, muscle excitation sites, and in the dorsal nerve cord.

The protein resides in the cell membrane. Its subcellular location is the synapse. Its function is as follows. Potassium channel activated by both membrane depolarization or increase in cytosolic Ca(2+) that mediates export of K(+). Its activation dampens the excitatory events that elevate the cytosolic Ca(2+) concentration and/or depolarize the cell membrane. It therefore contributes to repolarization of the membrane potential. Essential for the regulation of neurotransmitter release at synapses. Regulates longevity and age-associated decline in motor activity in mid-late life, by acting in motor neurons and through daf-16 in the intestine. When clustered in neurons, mediates ethanol-induced suppression of locomotory and egg-laying behaviors. This is Calcium-activated potassium channel slo-1 from Caenorhabditis elegans.